The chain runs to 419 residues: Protein distal antenna-related (419 aa).

In terms of domain architecture, HTH psq-type spans 15-66 (TRGKRPLRNLTPNDKVRAIQRIHNGETKASVSRDIGVPESTLRGWCKNEQKL). A DNA-binding region (H-T-H motif) is located at residues 42–62 (KASVSRDIGVPESTLRGWCKN). Disordered regions lie at residues 333–359 (QPGGGGPGGPSYNPNQMASGGSEPDLE) and 378–419 (EASN…DAEQ).

As to quaternary structure, interacts with itself, dan, ey and dac to form a complex (or complexes) containing the RD factors. In terms of tissue distribution, coexpressed with dan in the presumptive distal antenna, but not in the leg imaginal disk. Both proteins are also expressed in the brain and the eye region of the eye-antenna disk. First detected in early L3 eye disks in cells surrounding the newly initiated morphogenetic furrow. Highly expressed in evenly spaced clusters of cells anterior to the furrow, lower levels within and posterior to the furrow.

It is found in the nucleus. Probable transcription factor with a role in the retinal determination (RD) network. Regulates ato expression and is required for normal R8 induction and differentiation. Danr appears to repress Dan expression, but Dan is required for Danr expression anterior to the morphogenetic furrow (MF). Dan and Danr lie downstream of so and require dac function for highest levels of expression. Contributes to differentiation of antenna-specific characteristics; effector gene that acts downstream of homothorax (hth), Distal-less (Dll), cut (ct) and spineless (ss) genes to control differentiation of distal antennal structures. The protein is Protein distal antenna-related of Drosophila melanogaster (Fruit fly).